Reading from the N-terminus, the 305-residue chain is Tyrosine recombinase XerC (305 aa).

The Core-binding (CB) domain maps to 1–93; sequence MVLDGFAAHF…SWRQYCVWLV (93 aa). A Tyr recombinase domain is found at 114–294; it reads RVPKALPQEW…DFDHIARLYD (181 aa). Active-site residues include Arg-155, Lys-179, His-246, Arg-249, and His-272. Tyr-281 serves as the catalytic O-(3'-phospho-DNA)-tyrosine intermediate.

Belongs to the 'phage' integrase family. XerC subfamily. Forms a cyclic heterotetrameric complex composed of two molecules of XerC and two molecules of XerD.

It localises to the cytoplasm. Functionally, site-specific tyrosine recombinase, which acts by catalyzing the cutting and rejoining of the recombining DNA molecules. The XerC-XerD complex is essential to convert dimers of the bacterial chromosome into monomers to permit their segregation at cell division. It also contributes to the segregational stability of plasmids. This chain is Tyrosine recombinase XerC, found in Neisseria meningitidis serogroup C (strain 053442).